A 92-amino-acid polypeptide reads, in one-letter code: UPF0237 protein MA_3235 (92 aa).

An ACT domain is found at 7-81 (IITVIGSDRV…KSLGVEVKVQ (75 aa)).

The protein belongs to the UPF0237 family.

This is UPF0237 protein MA_3235 from Methanosarcina acetivorans (strain ATCC 35395 / DSM 2834 / JCM 12185 / C2A).